Reading from the N-terminus, the 551-residue chain is Rhodopsin kinase grk7-a (551 aa).

Phosphoserine is present on Ser36. Residues 57–174 (YQSICVEQPI…QNSPFYDRFL (118 aa)) enclose the RGS domain. Residues 189-451 (FYEFRILGKG…DDDPRKHAFF (263 aa)) enclose the Protein kinase domain. ATP-binding positions include 195–203 (LGKGGFGEV) and Lys218. The active-site Proton acceptor is the Asp314. Positions 452 to 517 (KSINFQRLEA…GAIPISWQKE (66 aa)) constitute an AGC-kinase C-terminal domain. Position 487 is a phosphoserine (Ser487). The segment at 529–551 (DPSREATGGGGNSGEKSGVCSIL) is disordered. The segment covering 542–551 (GEKSGVCSIL) has biased composition (low complexity). Position 548 is a cysteine methyl ester (Cys548). Cys548 is lipidated: S-geranylgeranyl cysteine. Residues 549–551 (SIL) constitute a propeptide, removed in mature form.

Belongs to the protein kinase superfamily. AGC Ser/Thr protein kinase family. GPRK subfamily. In terms of processing, autophosphorylated in vitro at Ser-487. Phosphorylation at Ser-36 is regulated by light and activated by cAMP.

Its subcellular location is the membrane. The catalysed reaction is L-threonyl-[rhodopsin] + ATP = O-phospho-L-threonyl-[rhodopsin] + ADP + H(+). It carries out the reaction L-seryl-[rhodopsin] + ATP = O-phospho-L-seryl-[rhodopsin] + ADP + H(+). Its function is as follows. Retina-specific kinase involved in the shutoff of the photoresponse and adaptation to changing light conditions via cone opsin phosphorylation, including rhodopsin (RHO). This Xenopus laevis (African clawed frog) protein is Rhodopsin kinase grk7-a (grk7-a).